A 114-amino-acid chain; its full sequence is MSLKDYLRQSISKDLEVRHRDSLKIRLGERHPLSVHQHMIAARQIIKSDNAEHQHVISSLSGFLDKQKSFLKVQQRALKQLEKLDVDEIIDTAAEVKAVSNNIKETLMASTELE.

Belongs to the herpesviridae UL96 family.

This chain is Protein U68 (U68), found in Homo sapiens (Human).